The chain runs to 326 residues: D-alanine--D-alanine ligase (326 aa).

The region spanning 114–313 is the ATP-grasp domain; it reads KRVWLQHGLR…YAELCVSIVS (200 aa). 140–195 lines the ATP pocket; the sequence is PDRLGLPLILKPPHEGSTVGITKVAGYSDMKEGYAQAAKFDDEVLAEQFIAGRELT. Mg(2+) contacts are provided by aspartate 267, glutamate 280, and asparagine 282.

It belongs to the D-alanine--D-alanine ligase family. The cofactor is Mg(2+). Mn(2+) is required as a cofactor.

It localises to the cytoplasm. The enzyme catalyses 2 D-alanine + ATP = D-alanyl-D-alanine + ADP + phosphate + H(+). The protein operates within cell wall biogenesis; peptidoglycan biosynthesis. Functionally, cell wall formation. This Bordetella petrii (strain ATCC BAA-461 / DSM 12804 / CCUG 43448) protein is D-alanine--D-alanine ligase.